A 66-amino-acid polypeptide reads, in one-letter code: Large ribosomal subunit protein bL31 (66 aa).

Zn(2+) contacts are provided by Cys16, Cys18, Cys36, and Cys39.

It belongs to the bacterial ribosomal protein bL31 family. Type A subfamily. As to quaternary structure, part of the 50S ribosomal subunit. Zn(2+) is required as a cofactor.

Binds the 23S rRNA. This Geobacillus sp. (strain WCH70) protein is Large ribosomal subunit protein bL31.